Here is a 931-residue protein sequence, read N- to C-terminus: Histone-lysine N-methyltransferase EZ1 (931 aa).

Residues Met-1 to Ala-30 show a composition bias toward low complexity. Disordered stretches follow at residues Met-1–Ala-37, Pro-372–Arg-450, and Arg-491–Ser-549. Polar residues predominate over residues Ser-375 to Ser-385. Positions Asn-386–Lys-398 are enriched in basic residues. Polar residues predominate over residues Ser-423 to Pro-433. The segment covering Ser-500 to Arg-509 has biased composition (low complexity). Positions Ala-528–Ser-549 are enriched in basic and acidic residues. One can recognise an SANT domain in the interval Tyr-565–Asn-615. One can recognise a CXC domain in the interval Phe-664–Asp-763. Positions Gln-778–Arg-893 constitute an SET domain. The span at Ala-903–Gly-915 shows a compositional bias: basic and acidic residues. Residues Ala-903–Gly-931 are disordered.

This sequence belongs to the class V-like SAM-binding methyltransferase superfamily. Histone-lysine methyltransferase family. EZ subfamily. Widely expressed.

It localises to the nucleus. The enzyme catalyses L-lysyl(27)-[histone H3] + 3 S-adenosyl-L-methionine = N(6),N(6),N(6)-trimethyl-L-lysyl(27)-[histone H3] + 3 S-adenosyl-L-homocysteine + 3 H(+). In terms of biological role, polycomb group (PcG) protein. Catalytic subunit of some PcG multiprotein complex, which methylates 'Lys-27' of histone H3, leading to transcriptional repression of the affected target genes. PcG proteins are not required to initiate repression, but to maintain it during later stages of development. In Zea mays (Maize), this protein is Histone-lysine N-methyltransferase EZ1 (EZ1).